Reading from the N-terminus, the 223-residue chain is Type III pantothenate kinase (223 aa).

17-24 (DIGNTRIH) lines the ATP pocket. Substrate contacts are provided by residues tyrosine 81 and 85–88 (GIDR). Residue aspartate 87 is the Proton acceptor of the active site. A K(+)-binding site is contributed by aspartate 102. Serine 105 provides a ligand contact to ATP. Threonine 157 lines the substrate pocket.

It belongs to the type III pantothenate kinase family. In terms of assembly, homodimer. Requires NH4(+) as cofactor. K(+) serves as cofactor.

Its subcellular location is the cytoplasm. The catalysed reaction is (R)-pantothenate + ATP = (R)-4'-phosphopantothenate + ADP + H(+). It functions in the pathway cofactor biosynthesis; coenzyme A biosynthesis; CoA from (R)-pantothenate: step 1/5. Not regulated by feedback inhibition by CoA and its thioesters as described for many other pantothenate kinases. Not inhibited by N-pentylpantothenamide (N5-Pan), and this compound cannot act as a substrate either. Its function is as follows. Catalyzes the phosphorylation of pantothenate (Pan), the first step in CoA biosynthesis. Can also utilize CTP or GTP instead of ATP as a phosphoryl donor, albeit to a lesser extent. The sequence is that of Type III pantothenate kinase (coaX) from Helicobacter pylori (strain ATCC 700392 / 26695) (Campylobacter pylori).